The chain runs to 7763 residues: Nonribosomal peptide synthetase agiA (7763 aa).

The condensation 1 stretch occupies residues 20–168; it reads APSVMQEEMI…DGWSARALLE (149 aa). Residues 469–866 are adenylation 1; the sequence is EQAASKWPSK…GRADGQIKLR (398 aa). One can recognise a Carrier 1 domain in the interval 995–1071; it reads LPESPAERLL…DVARAMSPSS (77 aa). Ser1032 is modified (O-(pantetheine 4'-phosphoryl)serine). The condensation 2 stretch occupies residues 1104–1526; it reads IYPCTPQQEG…GLSDQKLITG (423 aa). An adenylation 2 region spans residues 1562–1968; it reads FEMQADMTPQ…GRIDSQIKLR (407 aa). Residues 2090-2166 enclose the Carrier 2 domain; that stretch reads WEQGSIEDKI…SQAKCATSHT (77 aa). O-(pantetheine 4'-phosphoryl)serine is present on Ser2127. Residues 2212-2556 are epimerase (E); that stretch reads DHFNQSVLLD…IMPLVFNYQG (345 aa). The condensation 3 stretch occupies residues 2676 to 3016; sequence DIIPCTPMQR…PALVNTLLNF (341 aa). The adenylation 3 stretch occupies residues 3136–3531; that stretch reads WAAQVPEKVA…GRMDDQIKIR (396 aa). The 77-residue stretch at 3667 to 3743 folds into the Carrier 3 domain; that stretch reads GPESPTEIML…ELATILNTSY (77 aa). Ser3704 bears the O-(pantetheine 4'-phosphoryl)serine mark. The interval 3789–4238 is condensation 4; sequence VMPCTPFQEG…ISQSIDALVQ (450 aa). The segment at 4321-4687 is adenylation 4; the sequence is VGSQQPIIPI…GRFDRQIKIR (367 aa). The 75-residue stretch at 4806 to 4880 folds into the Carrier 4 domain; sequence APTTEREKVI…DLARQLESTA (75 aa). The residue at position 4840 (Ser4840) is an O-(pantetheine 4'-phosphoryl)serine. The condensation 5 stretch occupies residues 4902-5339; it reads SFAQGRLWFL…ALLNDLSMHD (438 aa). The segment at 5361–5765 is adenylation 5; the sequence is FRQEARSHPD…GRRDDQVKIR (405 aa). Residues 5820–5975 form an S-adenosyl-L-methionine-dependent N-methyltransferase region; it reads DAWKNVFDTE…YLSEIVQKLV (156 aa). A Carrier 5 domain is found at 6306 to 6381; that stretch reads EYGSEMERIL…RLADRLLSKQ (76 aa). Ser6341 bears the O-(pantetheine 4'-phosphoryl)serine mark. The segment at 6378–6399 is disordered; that stretch reads LSKQSDSNTEANTSTDGKTQHS. Residues 6379-6399 are compositionally biased toward polar residues; the sequence is SKQSDSNTEANTSTDGKTQHS. The tract at residues 6424-6883 is condensation 6; sequence MPCTPFQEGV…TVGDAEEAAL (460 aa). Positions 6913–7327 are adenylation 6; that stretch reads RQAMESPCKI…GRMDSQVKLR (415 aa). Residues 7446 to 7522 enclose the Carrier 6 domain; the sequence is PSPGTLEATL…SQAFRILCDV (77 aa). Residue Ser7483 is modified to O-(pantetheine 4'-phosphoryl)serine. The tract at residues 7542-7638 is thioesterase (TE); the sequence is TMVLIHPFFG…TGKGSPFSTV (97 aa).

The protein belongs to the NRP synthetase family.

Functionally, nonribosomal peptide synthetase; part of the gene cluster that mediates the biosynthesis of the aspergillicins A and F, 2 cryptic cyclic hexa-depsipeptides. The hexamodular NRPS agiA catalyzes the condensation of the six amino acid residues including N-Me-L-O-Me-tyrosine, L-proline 1, L-proline 2, D-isoleucine, O-acetyl-threonine, and L-isoleucine. The starting condensation domain (C1) of agiA probably loads acetyl-CoA which is condensed on the N-terminus of threonine by the first module to yield O-acetyl-threonine. The second module then loads L-isoleucine. The epimerase (E) domain on module 2 is probably involved in the formation of the D-isoleucine moiety. Modules 3 and 4 further load 2 successive L-prolines. Module 5 is then involved in the condensation of O-Me-L-tyrosine produced by the O-methyltransferase agiB and the N-methyl transferase (NMeT) domain on module 5 probably catalyzes the N-methylation to yield the N-Me-L-O-Me-tyrosine moiety. The A domain of module 5 loads preferentially O-Me-L-tyrosine, but it can also accept L-phenylalanine, which leads to the production of aspergillicin G. Module 6 then loads the last residue, L-isoleucine. The C-terminal thiolesterase (TE) domain probably cyclizes the peptide using the hydroxy group from threonine to form the cyclic depsipeptide. The chain is Nonribosomal peptide synthetase agiA from Aspergillus flavus (strain ATCC 200026 / FGSC A1120 / IAM 13836 / NRRL 3357 / JCM 12722 / SRRC 167).